The sequence spans 1030 residues: Exportin-T (1030 aa).

The protein belongs to the exportin family.

Its subcellular location is the nucleus. It localises to the cytoplasm. Functionally, tRNA nucleus export receptor which facilitates tRNA translocation across the nuclear pore complex. Involved in pre-tRNA splicing, probably by affecting the interaction of pre-tRNA with splicing endonuclease. The polypeptide is Exportin-T (los1) (Aspergillus niger (strain ATCC MYA-4892 / CBS 513.88 / FGSC A1513)).